Reading from the N-terminus, the 511-residue chain is MPNKLIIFDTTLRDGEQSPGASMTRDEKVRIAKVLEKMQVDVIEAGFAIASVGDFEAVQTVANVVQDSIICSLSRALDKDIDCAGEALKGANASRIHTFIATSDIHMKMKLQMTPDQVVEQAVRAVKRAKRYTNDVEFSPEDAGRSDEDFLCRIIEATINAGATTINIPDTVGYNIPHQFGVTIKSLIGRVPNSDKAIFSAHCHNDLGLAVANSLSAVLNGARQVECTINGLGERAGNTSLEELVMAVRTRQDIFDCDTDINATHILSASRLVSSVTGFIVQPNKAIVGANAFAHEAGIHQDGVIKYRETYEIMRAEDVGWNANQLVLGKHSGRNAFKVRLAELGVEFNNEEGLNDAFRRFKELADKKHEIFDEDLQALVSETQTEAYEAIKLVSLKVCTETGEKNTATVVLSIDDKEQTATANTSGAVDATFIAISSLTGIKINLQLYSVSNVTQGTDALGEVNVRLECNGRIVNGQGVDTDIITASAKAYVHGLNKVLAATNKAQHPQI.

Positions 5–267 constitute a Pyruvate carboxyltransferase domain; the sequence is LIIFDTTLRD…DTDINATHIL (263 aa). Asp-14, His-202, His-204, and Asn-238 together coordinate Mn(2+). The regulatory domain stretch occupies residues 392-511; the sequence is KLVSLKVCTE…ATNKAQHPQI (120 aa).

Belongs to the alpha-IPM synthase/homocitrate synthase family. LeuA type 1 subfamily. Homodimer. It depends on Mn(2+) as a cofactor.

It is found in the cytoplasm. The catalysed reaction is 3-methyl-2-oxobutanoate + acetyl-CoA + H2O = (2S)-2-isopropylmalate + CoA + H(+). It functions in the pathway amino-acid biosynthesis; L-leucine biosynthesis; L-leucine from 3-methyl-2-oxobutanoate: step 1/4. Its function is as follows. Catalyzes the condensation of the acetyl group of acetyl-CoA with 3-methyl-2-oxobutanoate (2-ketoisovalerate) to form 3-carboxy-3-hydroxy-4-methylpentanoate (2-isopropylmalate). This chain is 2-isopropylmalate synthase, found in Ruthia magnifica subsp. Calyptogena magnifica.